The chain runs to 222 residues: Putative N-acetylmannosamine-6-phosphate 2-epimerase (222 aa).

It belongs to the NanE family.

It carries out the reaction an N-acyl-D-glucosamine 6-phosphate = an N-acyl-D-mannosamine 6-phosphate. It functions in the pathway amino-sugar metabolism; N-acetylneuraminate degradation; D-fructose 6-phosphate from N-acetylneuraminate: step 3/5. Its function is as follows. Converts N-acetylmannosamine-6-phosphate (ManNAc-6-P) to N-acetylglucosamine-6-phosphate (GlcNAc-6-P). The polypeptide is Putative N-acetylmannosamine-6-phosphate 2-epimerase (Staphylococcus aureus (strain USA300)).